Here is a 288-residue protein sequence, read N- to C-terminus: Thiamine-monophosphate kinase (288 aa).

Residues Asp-20, Thr-30, and Asp-32 each coordinate Mg(2+). Asp-39 serves as a coordination point for substrate. The Mg(2+) site is built by Asp-60 and Asp-107. ATP contacts are provided by residues 106–107 (GD) and Arg-130. Position 188 (Asp-188) interacts with Mg(2+). Ser-190 lines the ATP pocket. Residue Asp-191 participates in Mg(2+) binding. Position 286 (Trp-286) interacts with substrate.

The protein belongs to the thiamine-monophosphate kinase family.

The enzyme catalyses thiamine phosphate + ATP = thiamine diphosphate + ADP. The protein operates within cofactor biosynthesis; thiamine diphosphate biosynthesis; thiamine diphosphate from thiamine phosphate: step 1/1. Its function is as follows. Catalyzes the ATP-dependent phosphorylation of thiamine-monophosphate (TMP) to form thiamine-pyrophosphate (TPP), the active form of vitamin B1. The sequence is that of Thiamine-monophosphate kinase from Halobacterium salinarum (strain ATCC 700922 / JCM 11081 / NRC-1) (Halobacterium halobium).